The following is a 184-amino-acid chain: ATP synthase subunit b, chloroplastic (184 aa).

The chain crosses the membrane as a helical span at residues 27–49 (LATNLINLSVVLGVLIFFGKGVL).

It belongs to the ATPase B chain family. In terms of assembly, F-type ATPases have 2 components, F(1) - the catalytic core - and F(0) - the membrane proton channel. F(1) has five subunits: alpha(3), beta(3), gamma(1), delta(1), epsilon(1). F(0) has four main subunits: a(1), b(1), b'(1) and c(10-14). The alpha and beta chains form an alternating ring which encloses part of the gamma chain. F(1) is attached to F(0) by a central stalk formed by the gamma and epsilon chains, while a peripheral stalk is formed by the delta, b and b' chains.

It localises to the plastid. It is found in the chloroplast thylakoid membrane. Its function is as follows. F(1)F(0) ATP synthase produces ATP from ADP in the presence of a proton or sodium gradient. F-type ATPases consist of two structural domains, F(1) containing the extramembraneous catalytic core and F(0) containing the membrane proton channel, linked together by a central stalk and a peripheral stalk. During catalysis, ATP synthesis in the catalytic domain of F(1) is coupled via a rotary mechanism of the central stalk subunits to proton translocation. In terms of biological role, component of the F(0) channel, it forms part of the peripheral stalk, linking F(1) to F(0). This is ATP synthase subunit b, chloroplastic from Helianthus annuus (Common sunflower).